The primary structure comprises 353 residues: 3-dehydroquinate synthase (353 aa).

NAD(+)-binding positions include 60 to 65, 94 to 98, 118 to 119, lysine 131, and lysine 140; these read AGDMNK, GMITD, and TT. 3 residues coordinate Zn(2+): glutamate 173, histidine 234, and histidine 253.

It belongs to the sugar phosphate cyclases superfamily. Dehydroquinate synthase family. NAD(+) is required as a cofactor. Requires Co(2+) as cofactor. The cofactor is Zn(2+).

It is found in the cytoplasm. It catalyses the reaction 7-phospho-2-dehydro-3-deoxy-D-arabino-heptonate = 3-dehydroquinate + phosphate. The protein operates within metabolic intermediate biosynthesis; chorismate biosynthesis; chorismate from D-erythrose 4-phosphate and phosphoenolpyruvate: step 2/7. Its function is as follows. Catalyzes the conversion of 3-deoxy-D-arabino-heptulosonate 7-phosphate (DAHP) to dehydroquinate (DHQ). The chain is 3-dehydroquinate synthase from Parabacteroides distasonis (strain ATCC 8503 / DSM 20701 / CIP 104284 / JCM 5825 / NCTC 11152).